A 75-amino-acid polypeptide reads, in one-letter code: Conotoxin Im23.5 (75 aa).

The N-terminal stretch at 1-23 (MKFFTCLLLLLVVLTVVFDNVDA) is a signal peptide. Cystine bridges form between Cys-24-Cys-28, Cys-37-Cys-40, and Cys-41-Cys-43. The propeptide occupies 24–50 (CDRSCTGVMGHPSCATCCACFTSAGKR).

As to expression, expressed by the venom duct.

The protein resides in the secreted. Its function is as follows. Probable neurotoxin. This chain is Conotoxin Im23.5, found in Conus imperialis (Imperial cone).